Consider the following 123-residue polypeptide: WAP four-disulfide core domain protein 5 (123 aa).

A signal peptide spans 1 to 24 (MRIQSLLLLGALLAVGSQLPAVFG). WAP domains lie at 27–73 (KGEK…CVPR) and 74–121 (VSVK…RDPA). 8 disulfides stabilise this stretch: Cys34–Cys62, Cys41–Cys66, Cys49–Cys61, Cys55–Cys70, Cys81–Cys109, Cys88–Cys113, Cys96–Cys108, and Cys102–Cys117.

It localises to the secreted. Putative acid-stable proteinase inhibitor. The polypeptide is WAP four-disulfide core domain protein 5 (WFDC5) (Chlorocebus aethiops (Green monkey)).